The primary structure comprises 248 residues: Probable transcriptional regulatory protein R02753 (248 aa).

Belongs to the TACO1 family.

Its subcellular location is the cytoplasm. This Rhizobium meliloti (strain 1021) (Ensifer meliloti) protein is Probable transcriptional regulatory protein R02753.